Here is a 24-residue protein sequence, read N- to C-terminus: FLPFIAGVAAKFLPKIFCAISKKC.

Cysteine 18 and cysteine 24 are oxidised to a cystine.

In terms of tissue distribution, expressed by the skin glands.

Its subcellular location is the secreted. In terms of biological role, antibacterial activity against Gram-positive bacterium S.aureus. The sequence is that of Brevinin-1Bc from Lithobates berlandieri (Rio Grande leopard frog).